A 185-amino-acid chain; its full sequence is CASP-like protein 2C3 (185 aa).

Over 1-13 (MAAAARVSEVKAE) the chain is Cytoplasmic. A helical membrane pass occupies residues 14 to 34 (GLLRGACAALAAAAALLVGLS). The Extracellular segment spans residues 35-53 (TQTETVLLVRKKATVKDVQ). Residues 54–74 (ALWVLAMAAAAAAGYHLLQLL) traverse the membrane as a helical segment. At 75–104 (KCLYLGRVGGARPCRRSSRALAWTCLLLDK) the chain is on the cytoplasmic side. Residues 105–125 (ACAYTTFATTVAAAQACVVAL) form a helical membrane-spanning segment. At 126 to 146 (DGAHAVQWTKLCNIYTRFCEQ) the chain is on the extracellular side. The chain crosses the membrane as a helical span at residues 147–167 (VAGSLVLGMLAAVGTAVLSAA). Residues 168 to 185 (SARNVFRHYSSLETYAAH) lie on the Cytoplasmic side of the membrane.

It belongs to the Casparian strip membrane proteins (CASP) family. As to quaternary structure, homodimer and heterodimers.

The protein resides in the cell membrane. This Zea mays (Maize) protein is CASP-like protein 2C3.